The chain runs to 943 residues: MTQDYKATLHLPATEFPMRGDLPKREPAMLERWEREGFYAQLRANAAGRPLFVLHDGPPYANGQIHLGHAVNKILKDIIVKSKCLAGFDAPYIPGWDCHGLPIEIAIEKKYGKVGVKLDAAEFRQKCREYATEQIDLQRRDFKRLGVIGDWDNPYKTLDFRFEANEIRALAKVVDNGHLTRGVKPVHWCFDCGSALAEAEIEYADKVSPTVDIAYPARDPGAVAAAFGATLPGGVGVAVPIWTTTPWTLPASLAVSLGAELDYVLVEGPADRGQPRWLVIAEALAAKALARYGVDEVVVHGHAKGTALEQMLLNHPFYAEREIPLLLGDHVSAEDGTGAVHTAPGHGQEDYQVSKQYGLLERYGAAQINPVDGRGVYLPSTPPLGDTVLAGLHIWKANDVIIEALHGTGVLLAASKMEHSYPHCWRHKTPIAFRATPQWFISMEQANLRADALKAIESVHWYPSWGQARIAGMVDGRPDWTISRQRTWGVPIALFVHRETGEPHPRSTELLRQVADRVELGGVDVWYTLDAAELLGDEAADYDKITDILDVWFDSGVTHEAVLVDRGLPKPADLYLEGSDQHRGWFQSSLLSGVAMDKAAPYKQCLTHGFTVDEHGRKMSKSLGNGIEPQDIMKTLGADILRLWIASADYSNEMSLSQEILKRNADAYRRLRNTARFLLGNLHGFDPLQHLVALEDMVLLDRWIVHRAHELQEKIVAAYARYDFAEIVQALLNFCSVDLGSLYLDVTKDRLYTMAEDARGRRSAQSAMYHVAEAFVRWIAPVMSFTADELWGYLPGKHVGNVLFATWYGGLAPLPADAALTSADFDKLLALREQVSKVLEPMRANGAIGAALEAEITVAADVQTAARWQPLAEELRFLFISGDVTVTAASTDDIFVSAQPTTKAKCVRCWHHQSSVGSDPRHPELCSRCVSNIEGPGEERRWF.

A 'HIGH' region motif is present at residues 59-69 (PYANGQIHLGH). E577 is a binding site for L-isoleucyl-5'-AMP. The 'KMSKS' region signature appears at 618–622 (KMSKS). K621 is a binding site for ATP. Zn(2+)-binding residues include C906, C909, C926, and C929.

This sequence belongs to the class-I aminoacyl-tRNA synthetase family. IleS type 1 subfamily. Monomer. The cofactor is Zn(2+).

Its subcellular location is the cytoplasm. It carries out the reaction tRNA(Ile) + L-isoleucine + ATP = L-isoleucyl-tRNA(Ile) + AMP + diphosphate. Functionally, catalyzes the attachment of isoleucine to tRNA(Ile). As IleRS can inadvertently accommodate and process structurally similar amino acids such as valine, to avoid such errors it has two additional distinct tRNA(Ile)-dependent editing activities. One activity is designated as 'pretransfer' editing and involves the hydrolysis of activated Val-AMP. The other activity is designated 'posttransfer' editing and involves deacylation of mischarged Val-tRNA(Ile). This chain is Isoleucine--tRNA ligase, found in Xanthomonas oryzae pv. oryzae (strain MAFF 311018).